Reading from the N-terminus, the 813-residue chain is Hyaluronate lyase HylB (813 aa).

The segment at residues 1–32 (MFGTPSRRTFLTASALSAMALAASPTVTDAIA) is a signal peptide (tat-type signal). Residues N222, H272, and Y281 contribute to the active site.

The protein belongs to the polysaccharide lyase 8 family. Post-translationally, predicted to be exported by the Tat system. The position of the signal peptide cleavage has not been experimentally proven.

It localises to the secreted. It carries out the reaction [hyaluronan](n) = n 3-(4-deoxy-beta-D-gluc-4-enuronosyl)-N-acetyl-D-glucosamine + H2O. Degrades hyaluronic acid (HA) exclusively into HA disaccharides (HA-2). Produced HA-2s confer anti-inflammatory properties leading to reduced immunopathology in the mouse model of acne. This chain is Hyaluronate lyase HylB, found in Cutibacterium acnes (strain DSM 16379 / KPA171202) (Propionibacterium acnes).